Here is a 316-residue protein sequence, read N- to C-terminus: tRNA dimethylallyltransferase (316 aa).

17–24 (GPTASGKT) provides a ligand contact to ATP. 19–24 (TASGKT) provides a ligand contact to substrate. Interaction with substrate tRNA regions lie at residues 42 to 45 (DSAL), 166 to 170 (QRLSR), and 247 to 252 (RCVGYR).

It belongs to the IPP transferase family. In terms of assembly, monomer. Mg(2+) is required as a cofactor.

The catalysed reaction is adenosine(37) in tRNA + dimethylallyl diphosphate = N(6)-dimethylallyladenosine(37) in tRNA + diphosphate. Catalyzes the transfer of a dimethylallyl group onto the adenine at position 37 in tRNAs that read codons beginning with uridine, leading to the formation of N6-(dimethylallyl)adenosine (i(6)A). The sequence is that of tRNA dimethylallyltransferase from Salmonella newport (strain SL254).